The following is a 429-amino-acid chain: MTAIAVVGSQWGDEGKGKITDFLSKDAAMAVRSNGGNNAGHTIEIGDKTFKMRLIPSGIFAAKKGAVIGNGVVINPEVMFGELDNLEKEGIDISGLKISNRAHVIMPYHILQDTYQEEAKGDKKIGTTKNGIGPCYMDKASRIGIRVCDLLERDTFEEKLRTNLAEKNALFTKVYNKPALKFEDIFEKYLEYGQKMKKYVTDTSVVVNDALDKNEKVLFEGAQGVMLDIDEGTYPYVTSSNTISGGIASGIGMGANRLNTVIGVCKAYTTRVGEGPFPTELLDEVGDRIRETAHEYGTVTGRPRRVGWFDSVALRHAKRVAGINALSLNLLDVFSGFDKIKIATAYELDGKKIDYYPASLKELYRCKPVYEELPAWDEDITNVKTWEDLPENAKKFLNRVSELVGVPLVTVSVGPDREQTIVLKNPWEM.

GTP-binding positions include 12–18 (GDEGKGK) and 40–42 (GHT). The active-site Proton acceptor is the Asp-13. Mg(2+) contacts are provided by Asp-13 and Gly-40. IMP is bound by residues 13–16 (DEGK), 38–41 (NAGH), Thr-128, Arg-142, Gln-223, Thr-238, and Arg-302. The Proton donor role is filled by His-41. A substrate-binding site is contributed by 298-304 (TVTGRPR). GTP contacts are provided by residues Arg-304, 330–332 (LLD), and 412–414 (SVG).

It belongs to the adenylosuccinate synthetase family. As to quaternary structure, homodimer. Mg(2+) serves as cofactor.

It is found in the cytoplasm. The enzyme catalyses IMP + L-aspartate + GTP = N(6)-(1,2-dicarboxyethyl)-AMP + GDP + phosphate + 2 H(+). The protein operates within purine metabolism; AMP biosynthesis via de novo pathway; AMP from IMP: step 1/2. Plays an important role in the de novo pathway of purine nucleotide biosynthesis. Catalyzes the first committed step in the biosynthesis of AMP from IMP. This Lactobacillus gasseri (strain ATCC 33323 / DSM 20243 / BCRC 14619 / CIP 102991 / JCM 1131 / KCTC 3163 / NCIMB 11718 / NCTC 13722 / AM63) protein is Adenylosuccinate synthetase.